The sequence spans 437 residues: F-box/FBD/LRR-repeat protein At5g22700 (437 aa).

Residues 5–51 form the F-box domain; sequence GDRISSLPDELLCQILSNLPTKNAVTTSILSTRWRSIWLSTPVLDID. LRR repeat units follow at residues 86–113, 134–160, 161–186, 187–210, 215–240, 272–297, and 322–350; these read RDDV…EVDC, SLRL…HLEE, NIYY…TVVR, IVDI…KLVL, GWFI…SLKD, PVTF…TISG, and NARF…VLGL. In terms of domain architecture, FBD spans 361 to 406; it reads RVSSVPPCFLSSLEFVEIRSRLCRKRYVMKVARYFAKNSVMLKKFV.

This Arabidopsis thaliana (Mouse-ear cress) protein is F-box/FBD/LRR-repeat protein At5g22700.